Here is a 363-residue protein sequence, read N- to C-terminus: tRNA dimethylallyltransferase (363 aa).

Residue 65–72 (GPTASGKS) participates in ATP binding. 67 to 72 (TASGKS) contributes to the substrate binding site. Interaction with substrate tRNA stretches follow at residues 90-93 (DSMQ) and 214-218 (QRLIR).

It belongs to the IPP transferase family. As to quaternary structure, monomer. Requires Mg(2+) as cofactor.

It catalyses the reaction adenosine(37) in tRNA + dimethylallyl diphosphate = N(6)-dimethylallyladenosine(37) in tRNA + diphosphate. Its function is as follows. Catalyzes the transfer of a dimethylallyl group onto the adenine at position 37 in tRNAs that read codons beginning with uridine, leading to the formation of N6-(dimethylallyl)adenosine (i(6)A). The chain is tRNA dimethylallyltransferase from Rickettsia massiliae (strain Mtu5).